Here is a 79-residue protein sequence, read N- to C-terminus: Conotoxin VnMSGL-0122 (79 aa).

The N-terminal stretch at 1 to 20 (MSGLGIMVLALLLLVFMATS) is a signal peptide. Residues 21–44 (HQDGGGKQATQRDAINVRRRRSIT) constitute a propeptide that is removed on maturation. 3 disulfides stabilise this stretch: C52-C64, C56-C73, and C63-C77. L78 is modified (leucine amide).

This sequence belongs to the conotoxin O3 superfamily. Expressed by the venom duct.

It localises to the secreted. This Conus ventricosus (Mediterranean cone) protein is Conotoxin VnMSGL-0122.